The chain runs to 763 residues: Endothelin-converting enzyme 2 (763 aa).

Topologically, residues 1–60 are cytoplasmic; sequence MNVALHELGGGGSMVEYKRAKLRDEESPEITVEGRATRDSLEVGFQKRTRQLFGSHTQLE. The residue at position 27 (serine 27) is a Phosphoserine. Residues 61-81 traverse the membrane as a helical; Signal-anchor for type II membrane protein segment; that stretch reads LVLAGLILVLAALLLGCLVAL. The Lumenal portion of the chain corresponds to 82 to 763; sequence WVHRDPAHST…MNPGQLCEVW (682 aa). The 673-residue stretch at 91-763 folds into the Peptidase M13 domain; sequence TCVTEACIRV…MNPGQLCEVW (673 aa). Disulfide bonds link cysteine 92–cysteine 97, cysteine 115–cysteine 748, cysteine 123–cysteine 708, cysteine 179–cysteine 428, and cysteine 637–cysteine 760. N-linked (GlcNAc...) asparagine glycosylation is found at asparagine 159, asparagine 163, asparagine 204, asparagine 264, asparagine 309, asparagine 376, and asparagine 532. Histidine 600 contacts Zn(2+). Residue glutamate 601 is part of the active site. Residue histidine 604 coordinates Zn(2+). Asparagine 625 and asparagine 633 each carry an N-linked (GlcNAc...) asparagine glycan. Zn(2+) is bound at residue glutamate 660. Aspartate 664 (proton donor) is an active-site residue.

Belongs to the peptidase M13 family. It depends on Zn(2+) as a cofactor.

The protein resides in the golgi apparatus membrane. The protein localises to the cytoplasmic vesicle. Its subcellular location is the secretory vesicle membrane. The enzyme catalyses Hydrolysis of the 21-Trp-|-Val-22 bond in big endothelin to form endothelin 1.. Converts big endothelin-1 to endothelin-1. Also involved in the processing of various neuroendocrine peptides, including neurotensin, angiotensin I, substance P, proenkephalin-derived peptides, and prodynorphin-derived peptides. May play a role in amyloid-beta processing. This chain is Endothelin-converting enzyme 2, found in Mus musculus (Mouse).